The chain runs to 746 residues: UvrABC system protein C (746 aa).

Positions 18–97 constitute a GIY-YIG domain; it reads AKPGVYKWRD…IKEFDPRFNV (80 aa). A UVR domain is found at 211-246; the sequence is RPYIAQLTRDMKEASAELEFEKAARLRDQIQMLETV. Positions 557-577 are disordered; it reads ANGNDNGEGGSDISGKGHAVP.

It belongs to the UvrC family. As to quaternary structure, interacts with UvrB in an incision complex.

The protein localises to the cytoplasm. Its function is as follows. The UvrABC repair system catalyzes the recognition and processing of DNA lesions. UvrC both incises the 5' and 3' sides of the lesion. The N-terminal half is responsible for the 3' incision and the C-terminal half is responsible for the 5' incision. The sequence is that of UvrABC system protein C from Bifidobacterium longum (strain DJO10A).